An 87-amino-acid polypeptide reads, in one-letter code: MSEIKIYRVEGVMLLSHDRFPVWQKFTKEVRALNKEQAIEYVYSVLGSNHKLRRKHIRITKIEEITLSEVRDRRIVALARLERFVKL.

Belongs to the eukaryotic ribosomal protein eL20 family. In terms of assembly, part of the 50S ribosomal subunit. Binds 23S rRNA.

The protein is Large ribosomal subunit protein eL20 of Staphylothermus marinus (strain ATCC 43588 / DSM 3639 / JCM 9404 / F1).